Here is a 101-residue protein sequence, read N- to C-terminus: MMLEYALVLSAFLFSIGIYGLITSRNMVRALMCLELILNAVNMNLVTFSYFFDNRQLKGDIFSIFIIAIAAAEAAIGLAIVSSIYRNRKSTRIDQSNLLNN.

3 consecutive transmembrane segments (helical) span residues methionine 2–isoleucine 22, methionine 32–phenylalanine 52, and isoleucine 61–valine 81.

Belongs to the complex I subunit 4L family. As to quaternary structure, NDH is composed of at least 16 different subunits, 5 of which are encoded in the nucleus.

The protein localises to the plastid. The protein resides in the chloroplast thylakoid membrane. The catalysed reaction is a plastoquinone + NADH + (n+1) H(+)(in) = a plastoquinol + NAD(+) + n H(+)(out). It carries out the reaction a plastoquinone + NADPH + (n+1) H(+)(in) = a plastoquinol + NADP(+) + n H(+)(out). In terms of biological role, NDH shuttles electrons from NAD(P)H:plastoquinone, via FMN and iron-sulfur (Fe-S) centers, to quinones in the photosynthetic chain and possibly in a chloroplast respiratory chain. The immediate electron acceptor for the enzyme in this species is believed to be plastoquinone. Couples the redox reaction to proton translocation, and thus conserves the redox energy in a proton gradient. The chain is NAD(P)H-quinone oxidoreductase subunit 4L, chloroplastic from Ipomoea purpurea (Common morning glory).